Reading from the N-terminus, the 636-residue chain is Threonine--tRNA ligase (636 aa).

Positions 1 to 61 (MINITLPDDS…RNDCAVRLIT (61 aa)) constitute a TGS domain. The tract at residues 238 to 528 (DHRKIGTRMG…LVEHFAGKFP (291 aa)) is catalytic. Residues Cys329, His380, and His505 each contribute to the Zn(2+) site.

This sequence belongs to the class-II aminoacyl-tRNA synthetase family. Homodimer. The cofactor is Zn(2+).

It is found in the cytoplasm. It catalyses the reaction tRNA(Thr) + L-threonine + ATP = L-threonyl-tRNA(Thr) + AMP + diphosphate + H(+). Functionally, catalyzes the attachment of threonine to tRNA(Thr) in a two-step reaction: L-threonine is first activated by ATP to form Thr-AMP and then transferred to the acceptor end of tRNA(Thr). Also edits incorrectly charged L-seryl-tRNA(Thr). The protein is Threonine--tRNA ligase of Desulforapulum autotrophicum (strain ATCC 43914 / DSM 3382 / VKM B-1955 / HRM2) (Desulfobacterium autotrophicum).